A 184-amino-acid chain; its full sequence is Ribosome-recycling factor (184 aa).

The protein belongs to the RRF family.

It localises to the cytoplasm. In terms of biological role, responsible for the release of ribosomes from messenger RNA at the termination of protein biosynthesis. May increase the efficiency of translation by recycling ribosomes from one round of translation to another. The polypeptide is Ribosome-recycling factor (Borreliella afzelii (strain PKo) (Borrelia afzelii)).